An 898-amino-acid polypeptide reads, in one-letter code: Transportin-1 (898 aa).

M1 carries the N-acetylmethionine modification. HEAT repeat units follow at residues 19-46, 51-89, 98-131, 137-174, 181-211, 224-251, 263-290, 306-397, 405-433, 445-472, 486-519, 527-560, 568-606, 614-665, 676-707, 715-748, 756-791, 799-832, 841-872, and 875-895; these read GLQQ…QKLE, YPDF…AHFQ, FIKS…KGEL, LLPK…LDSD, NIMI…QFII, FIEN…VMLL, HNIV…FWLT, PKLI…LANV, HILP…GAIA, PELI…TLSR, LKPL…EEEA, LAYI…ADSV, EYIQ…TALQ, EPVY…GLGG, ILTL…KACF, ADFM…IQMG, PMVL…YVCP, QQFI…ISVN, IFFC…KNQV, and ENWR…LAAF. An Importin N-terminal domain is found at 41 to 109; it reads VQQKLEQLNQ…KSECLNNIGD (69 aa). A disordered region spans residues 347-374; it reads FHRSRTVAQQHDEDGIEEEDDDDDEIDD. Over residues 360 to 374 the composition is skewed to acidic residues; the sequence is DGIEEEDDDDDEIDD.

Belongs to the importin beta family. Importin beta-2 subfamily. Identified in a complex that contains TNPO1, RAN and RANBP1. Binds HNRPA1, HNRPA2, HNRNPDL, RPS7, RPL5 and RAN. Interacts with H2A, H2B, H3 and H4 histones. Interacts with isoform 1 and isoform 5 of ADAR/ADAR1 (via DRBM 3 domain). Interacts with SNAI1 (via zinc fingers); the interaction mediates SNAI1 nuclear import. Interacts with SNAI2 (via zinc fingers). Interacts with RPL23A (via BIB domain) and SRP19; this interaction is involved in RPL23A and SRP19 import into the nucleus. Interacts (via HEAT repeats 8-12) with BAP1 (via non-classical PY-NLS); this interaction is direct, is involved in BAP1 nuclear import and disrupts BAP1 homodimerization. In terms of assembly, (Microbial infection) Binds to HIV-1 Rev.

It is found in the cytoplasm. The protein resides in the nucleus. Functionally, functions in nuclear protein import as nuclear transport receptor. Serves as receptor for nuclear localization signals (NLS) in cargo substrates. May mediate docking of the importin/substrate complex to the nuclear pore complex (NPC) through binding to nucleoporin and the complex is subsequently translocated through the pore by an energy requiring, Ran-dependent mechanism. At the nucleoplasmic side of the NPC, Ran binds to the importin, the importin/substrate complex dissociates and importin is re-exported from the nucleus to the cytoplasm where GTP hydrolysis releases Ran. The directionality of nuclear import is thought to be conferred by an asymmetric distribution of the GTP- and GDP-bound forms of Ran between the cytoplasm and nucleus. Involved in nuclear import of M9-containing proteins. In vitro, binds directly to the M9 region of the heterogeneous nuclear ribonucleoproteins (hnRNP), A1 and A2 and mediates their nuclear import. Involved in hnRNP A1/A2 nuclear export. Mediates the nuclear import of ribosomal proteins RPL23A, RPS7 and RPL5. In vitro, mediates nuclear import of H2A, H2B, H3 and H4 histones. In vitro, mediates nuclear import of SRP19. Mediates nuclear import of ADAR/ADAR1 isoform 1 and isoform 5 in a RanGTP-dependent manner. Main mediator of PR-DUB complex component BAP1 nuclear import; acts redundantly with the karyopherins KPNA1 and KPNA2. (Microbial infection) In case of HIV-1 infection, binds and mediates the nuclear import of HIV-1 Rev. This is Transportin-1 (TNPO1) from Homo sapiens (Human).